The following is a 216-amino-acid chain: MVEWITSDAPVPYPLAVAEMEARANAIAKGEAGEAVWLLEHPPLYTAGTSARESDLRDPDRFPVFETRRGGQYTYHGPGQRVAYVMLDLNTRGKDVRAFVQRLEAWVIAALDDFNVTGAVREGRVGVWVDRPEKAPLPDGTPREDKIAAIGVRLRKWVSFHGLSINVEPDLSHFDGIVPCGIEGHGVTSLVDLGLPVTMADLDVALKRQFFEVFGA.

The BPL/LPL catalytic domain maps to 30–216 (GEAGEAVWLL…KRQFFEVFGA (187 aa)). Substrate contacts are provided by residues 69–76 (RGGQYTYH), 149–151 (AIG), and 162–164 (GLS). C180 acts as the Acyl-thioester intermediate in catalysis.

The protein belongs to the LipB family.

It is found in the cytoplasm. The enzyme catalyses octanoyl-[ACP] + L-lysyl-[protein] = N(6)-octanoyl-L-lysyl-[protein] + holo-[ACP] + H(+). It functions in the pathway protein modification; protein lipoylation via endogenous pathway; protein N(6)-(lipoyl)lysine from octanoyl-[acyl-carrier-protein]: step 1/2. Catalyzes the transfer of endogenously produced octanoic acid from octanoyl-acyl-carrier-protein onto the lipoyl domains of lipoate-dependent enzymes. Lipoyl-ACP can also act as a substrate although octanoyl-ACP is likely to be the physiological substrate. This chain is Octanoyltransferase, found in Jannaschia sp. (strain CCS1).